The following is a 180-amino-acid chain: Large ribosomal subunit protein mL41 (180 aa).

A mitochondrion-targeting transit peptide spans 1–21 (MKLVLVSTRGVRSLNSTNFPA).

The protein belongs to the mitochondrion-specific ribosomal protein mL41 family. In terms of assembly, component of the mitochondrial ribosome large subunit (39S) which comprises a 16S rRNA and about 50 distinct proteins.

The protein localises to the mitochondrion. In Caenorhabditis elegans, this protein is Large ribosomal subunit protein mL41 (mrpl-41).